The chain runs to 129 residues: Glycine cleavage system H protein (129 aa).

In terms of domain architecture, Lipoyl-binding spans Leu24–Lys106. N6-lipoyllysine is present on Lys65.

It belongs to the GcvH family. The glycine cleavage system is composed of four proteins: P, T, L and H. Requires (R)-lipoate as cofactor.

In terms of biological role, the glycine cleavage system catalyzes the degradation of glycine. The H protein shuttles the methylamine group of glycine from the P protein to the T protein. The sequence is that of Glycine cleavage system H protein from Prochlorococcus marinus subsp. pastoris (strain CCMP1986 / NIES-2087 / MED4).